A 428-amino-acid polypeptide reads, in one-letter code: GTPase Obg (428 aa).

Residues 1-158 enclose the Obg domain; the sequence is MFVDQVKIYV…RDVILELKVL (158 aa). One can recognise an OBG-type G domain in the interval 159–329; the sequence is ADVGLVGFPS…LLFEVANLIE (171 aa). GTP is bound by residues 165 to 172, 190 to 194, 212 to 215, 282 to 285, and 310 to 312; these read GFPSVGKS, FTTIV, DLPG, NKMD, and SAV. Residues S172 and T192 each contribute to the Mg(2+) site. One can recognise an OCT domain in the interval 350–428; sequence KFDTEGVKFE…ILEYEFEFID (79 aa).

Belongs to the TRAFAC class OBG-HflX-like GTPase superfamily. OBG GTPase family. Monomer. It depends on Mg(2+) as a cofactor.

The protein localises to the cytoplasm. In terms of biological role, an essential GTPase which binds GTP, GDP and possibly (p)ppGpp with moderate affinity, with high nucleotide exchange rates and a fairly low GTP hydrolysis rate. Plays a role in control of the cell cycle, stress response, ribosome biogenesis and in those bacteria that undergo differentiation, in morphogenesis control. This is GTPase Obg from Bacillus cereus (strain B4264).